We begin with the raw amino-acid sequence, 623 residues long: Set1/Ash2 histone methyltransferase complex subunit ASH2 (623 aa).

A compositionally biased stretch (gly residues) spans Met1–Pro18. The PHD-type; atypical zinc-finger motif lies at Met1–Asn62. A disordered region spans residues Met1–Glu99. Low complexity predominate over residues Ala36 to Ala56. The tract at residues Leu63 to Thr172 is DNA-binding. Over residues Gly84–Gly95 the composition is skewed to polar residues. Ser96 carries the post-translational modification Phosphoserine. A C4-type zinc finger spans residues Cys112–Cys145. Residues Leu230 to Pro247 show a composition bias toward basic and acidic residues. The tract at residues Leu230–Pro326 is disordered. Positions Asn265–Asn277 are enriched in polar residues. The span at Leu278 to Gly290 shows a compositional bias: gly residues. At Arg291 the chain carries Asymmetric dimethylarginine; by PRMT1 and PRMT5. At Ser311 the chain carries Phosphoserine. Positions Ser311–Pro623 are interaction with RBBP5. The region spanning Leu355–Lys578 is the B30.2/SPRY domain.

As to quaternary structure, interacts with HCFC1. Core component of several methyltransferase-containing complexes including MLL1/MLL, MLL2/3 (also named ASCOM complex) and MLL4/WBP7. Each complex is at least composed of ASH2L, RBBP5, WDR5, DPY30, one or more specific histone methyltransferases (KMT2A/MLL1, KMT2D/MLL2, KMT2C/MLL3 and KMT2B/MLL4), and the facultative components PAGR1, BACC1, CHD8, E2F6, HCFC1, HCFC2, HSP70, INO80C, KDM6A, KANSL1, LAS1L, MAX, MCRS1, MEN1, MGA, KAT8/MOF, NCOA6, PAXIP1/PTIP, PELP1, PHF20, PRP31, RING2, RUVB1/TIP49A, RUVB2/TIP49B, SENP3, TAF1, TAF4, TAF6, TAF7, TAF9, TEX10 and alpha- and beta-tubulin. Component of the SET1 complex, at least composed of the catalytic subunit (SETD1A or SETD1B), WDR5, WDR82, RBBP5, ASH2L/ASH2, CXXC1/CFP1, HCFC1 and DPY30. Found in a complex with RBBP5, ASH2L, DPY30, KMT2A, KMT2D and WDR5. Component of a histone methylation complex composed of at least ZNF335, RBBP5, ASH2L and WDR5; the complex may have histone H3-specific methyltransferase activity, however does not have specificity for 'Lys-4' of histone H3. Within the complex, interacts with ZNF335. Interacts with RBBP5. Components of this complex may associate with components of a nuclear receptor-mediated transcription complex to form a complex at least composed of ZNF335, HCFC1, CCAR2, EMSY, MKI67, RBBP5, ASH2L and WDR5. Within this complex also interacts with CCAR2 and EMSY. Interacts with DPY30. Interacts with SETD1A and SETD1B. Post-translationally, both monomethylated and dimethylated on arginine residues in the C-terminus. Arg-291 is the major site. Methylation is not required for nuclear localization, nor for MLL complex integrity or maintenance of global histone H3K4me3 levels. In terms of tissue distribution, ubiquitously expressed, with abundant expression in the heart, skeletal muscle and kidney. Low expression is seen in spleen, lung and testis.

It is found in the nucleus. Its function is as follows. Transcriptional regulator. Component or associated component of some histone methyltransferase complexes which regulates transcription through recruitment of those complexes to gene promoters. Component of the Set1/Ash2 histone methyltransferase (HMT) complex, a complex that specifically methylates 'Lys-4' of histone H3, but not if the neighboring 'Lys-9' residue is already methylated. As part of the MLL1/MLL complex it is involved in methylation and dimethylation at 'Lys-4' of histone H3. May play a role in hematopoiesis. In association with RBBP5 and WDR5, stimulates the histone methyltransferase activities of KMT2A, KMT2B, KMT2C, KMT2D, SETD1A and SETD1B. The protein is Set1/Ash2 histone methyltransferase complex subunit ASH2 (Ash2l) of Mus musculus (Mouse).